The following is an 83-amino-acid chain: Three-finger toxin MALT0066C (83 aa).

The N-terminal stretch at 1 to 21 (MKTLLLTLVVVTIVCLDFGHT) is a signal peptide. 4 disulfide bridges follow: Cys24–Cys45, Cys38–Cys62, Cys64–Cys75, and Cys76–Cys81.

Belongs to the three-finger toxin family. Short-chain subfamily. Type I alpha-neurotoxin sub-subfamily. As to quaternary structure, dimer. As to expression, expressed by the venom gland.

Its subcellular location is the secreted. Binds to muscle nicotinic acetylcholine receptor (nAChR) and inhibit acetylcholine from binding to the receptor, thereby impairing neuromuscular transmission. The chain is Three-finger toxin MALT0066C from Micrurus altirostris (Uruguayan coral snake).